Here is a 73-residue protein sequence, read N- to C-terminus: Translation initiation factor IF-1 (73 aa).

Positions 1-73 (MAKKEDTIVL…TKARVVYRHR (73 aa)) constitute an S1-like domain.

The protein belongs to the IF-1 family. As to quaternary structure, component of the 30S ribosomal translation pre-initiation complex which assembles on the 30S ribosome in the order IF-2 and IF-3, IF-1 and N-formylmethionyl-tRNA(fMet); mRNA recruitment can occur at any time during PIC assembly.

It localises to the cytoplasm. Its function is as follows. One of the essential components for the initiation of protein synthesis. Stabilizes the binding of IF-2 and IF-3 on the 30S subunit to which N-formylmethionyl-tRNA(fMet) subsequently binds. Helps modulate mRNA selection, yielding the 30S pre-initiation complex (PIC). Upon addition of the 50S ribosomal subunit IF-1, IF-2 and IF-3 are released leaving the mature 70S translation initiation complex. This chain is Translation initiation factor IF-1, found in Chlamydia abortus (strain DSM 27085 / S26/3) (Chlamydophila abortus).